A 95-amino-acid chain; its full sequence is Co-chaperonin GroES (95 aa).

It belongs to the GroES chaperonin family. As to quaternary structure, heptamer of 7 subunits arranged in a ring. Interacts with the chaperonin GroEL.

It localises to the cytoplasm. In terms of biological role, together with the chaperonin GroEL, plays an essential role in assisting protein folding. The GroEL-GroES system forms a nano-cage that allows encapsulation of the non-native substrate proteins and provides a physical environment optimized to promote and accelerate protein folding. GroES binds to the apical surface of the GroEL ring, thereby capping the opening of the GroEL channel. The polypeptide is Co-chaperonin GroES (Pelobacter propionicus (strain DSM 2379 / NBRC 103807 / OttBd1)).